The chain runs to 140 residues: Organic hydroperoxide resistance protein-like (140 aa).

The protein belongs to the OsmC/Ohr family.

This chain is Organic hydroperoxide resistance protein-like, found in Staphylococcus aureus (strain USA300).